A 421-amino-acid polypeptide reads, in one-letter code: UDP-N-acetylglucosamine 1-carboxyvinyltransferase (421 aa).

22–23 (KN) lines the phosphoenolpyruvate pocket. Position 94 (Arg94) interacts with UDP-N-acetyl-alpha-D-glucosamine. The Proton donor role is filled by Cys118. Cys118 carries the 2-(S-cysteinyl)pyruvic acid O-phosphothioketal modification. UDP-N-acetyl-alpha-D-glucosamine is bound by residues 123-127 (RPMDL), Asp308, and Ile330.

Belongs to the EPSP synthase family. MurA subfamily.

It is found in the cytoplasm. It carries out the reaction phosphoenolpyruvate + UDP-N-acetyl-alpha-D-glucosamine = UDP-N-acetyl-3-O-(1-carboxyvinyl)-alpha-D-glucosamine + phosphate. It functions in the pathway cell wall biogenesis; peptidoglycan biosynthesis. Cell wall formation. Adds enolpyruvyl to UDP-N-acetylglucosamine. This chain is UDP-N-acetylglucosamine 1-carboxyvinyltransferase, found in Ruegeria pomeroyi (strain ATCC 700808 / DSM 15171 / DSS-3) (Silicibacter pomeroyi).